We begin with the raw amino-acid sequence, 431 residues long: Nuclear receptor subfamily 1 group I member 2 (431 aa).

NR C4-type zinc fingers lie at residues 38-58 (CRVC…CEGC) and 74-99 (CPFR…LRKC). Positions 38-104 (CRVCGDKANG…RLRKCLESGM (67 aa)) form a DNA-binding region, nuclear receptor. A Bipartite nuclear localization signal motif is present at residues 63 to 89 (RRAMKRNVRLRCPFRKGTCEITRKTRR). Residues 105–142 (KKEMIMSDAAVEQRRALIKRKKREKIEAPPPGGQGLTE) form a hinge region. The NR LBD domain occupies 143–430 (EQQALIQELM…LMQELFSSTD (288 aa)). Residues Ser244 and 282–285 (ILRF) contribute to the hyperforin site.

It belongs to the nuclear hormone receptor family. NR1 subfamily. As to quaternary structure, heterodimer with RXRA. Interacts with NCOA1. Interacts (via domain NR LBD) with CRY1 and CRY2 in a ligand-dependent manner.

The protein localises to the nucleus. Its function is as follows. Nuclear receptor that binds and is activated by a variety of endogenous and xenobiotic compounds. Transcription factor that activates the transcription of multiple genes involved in the metabolism and secretion of potentially harmful xenobiotics, endogenous compounds and drugs. Response to specific ligands is species-specific, due to differences in the ligand-binding domain. Activated by naturally occurring steroids, such as pregnenolone and progesterone. Binds to a response element in the promoters of the CYP3A4 and ABCB1/MDR1 genes. This is Nuclear receptor subfamily 1 group I member 2 (Nr1i2) from Rattus norvegicus (Rat).